The sequence spans 1366 residues: Guanine nucleotide exchange factor LTE1 (1366 aa).

The region spanning 37–170 (GTVRILKCTL…SLKKLWVQNV (134 aa)) is the N-terminal Ras-GEF domain. 3 disordered regions span residues 290–314 (SGVS…KDNK), 661–690 (EKSD…ESDA), and 955–979 (STDE…DHGI). Basic and acidic residues-rich tracts occupy residues 298–314 (PKQE…KDNK) and 661–670 (EKSDSTDDRS). The segment covering 671 to 690 (CSPQNREATETSATSMESDA) has biased composition (polar residues). A Ras-GEF domain is found at 1121-1361 (DSKSVANQLT…LSHDEINSIS (241 aa)).

The protein belongs to the LTE1 family.

It is found in the cytoplasm. The protein resides in the bud. Its function is as follows. GDP-GTP exchange factor component of the mitotic exit network (MEN). Fine-tunes the timing of the mitotic exit and couples this event with cytokinesis. May also be involved in proprotein-processing in the secretory pathway. The polypeptide is Guanine nucleotide exchange factor LTE1 (LTE1) (Kluyveromyces lactis (strain ATCC 8585 / CBS 2359 / DSM 70799 / NBRC 1267 / NRRL Y-1140 / WM37) (Yeast)).